The sequence spans 203 residues: Endo-type membrane-bound lytic murein transglycosylase A (203 aa).

The N-terminal stretch at 1 to 15 is a signal peptide; it reads MKLRWFAFLVVLLAG. Cys16 carries N-palmitoyl cysteine lipidation. Cys16 is lipidated: S-diacylglycerol cysteine.

Belongs to the transglycosylase Slt family.

The protein localises to the cell outer membrane. The enzyme catalyses Endolytic cleavage of the (1-&gt;4)-beta-glycosidic linkage between N-acetylmuramic acid (MurNAc) and N-acetylglucosamine (GlcNAc) residues in peptidoglycan with concomitant formation of a 1,6-anhydrobond in the MurNAc residue.. Murein-degrading enzyme. May play a role in recycling of muropeptides during cell elongation and/or cell division. Preferentially cleaves at a distance of more than two disaccharide units from the ends of the glycan chain. The protein is Endo-type membrane-bound lytic murein transglycosylase A of Escherichia fergusonii (strain ATCC 35469 / DSM 13698 / CCUG 18766 / IAM 14443 / JCM 21226 / LMG 7866 / NBRC 102419 / NCTC 12128 / CDC 0568-73).